Consider the following 285-residue polypeptide: Energy-coupling factor transporter ATP-binding protein EcfA3 (285 aa).

The 237-residue stretch at 6–242 (LKVEELNYNY…KEVIRKVNLR (237 aa)) folds into the ABC transporter domain. Residue 39 to 46 (GGNGVGKS) participates in ATP binding.

The protein belongs to the ABC transporter superfamily. Energy-coupling factor EcfA family. As to quaternary structure, forms a stable energy-coupling factor (ECF) transporter complex composed of 2 membrane-embedded substrate-binding proteins (S component), 2 ATP-binding proteins (A component) and 2 transmembrane proteins (T component).

It is found in the cell membrane. In terms of biological role, ATP-binding (A) component of a common energy-coupling factor (ECF) ABC-transporter complex. Unlike classic ABC transporters this ECF transporter provides the energy necessary to transport a number of different substrates. This chain is Energy-coupling factor transporter ATP-binding protein EcfA3, found in Clostridium perfringens (strain ATCC 13124 / DSM 756 / JCM 1290 / NCIMB 6125 / NCTC 8237 / Type A).